The following is a 206-amino-acid chain: Small ribosomal subunit protein uS4 (206 aa).

In terms of domain architecture, S4 RNA-binding spans 96–158 (SRLDNVVYRM…AKGQLRIKGA (63 aa)).

Belongs to the universal ribosomal protein uS4 family. In terms of assembly, part of the 30S ribosomal subunit. Contacts protein S5. The interaction surface between S4 and S5 is involved in control of translational fidelity.

One of the primary rRNA binding proteins, it binds directly to 16S rRNA where it nucleates assembly of the body of the 30S subunit. Functionally, with S5 and S12 plays an important role in translational accuracy. This Coxiella burnetii (strain CbuK_Q154) (Coxiella burnetii (strain Q154)) protein is Small ribosomal subunit protein uS4.